The following is a 350-amino-acid chain: GTPase Obg (350 aa).

Positions 1–175 (MFVDNIRIFA…GVFFMELRRI (175 aa)) constitute an Obg domain. Residues 176–345 (ADAGLVGYPN…LRNRLDELVG (170 aa)) enclose the OBG-type G domain. GTP is bound by residues 182 to 189 (GYPNAGKS), 207 to 211 (FTTLQ), 229 to 232 (DIPG), 299 to 302 (NKMD), and 326 to 328 (SAL). Mg(2+) contacts are provided by Ser189 and Thr209.

The protein belongs to the TRAFAC class OBG-HflX-like GTPase superfamily. OBG GTPase family. Monomer. The cofactor is Mg(2+).

The protein localises to the cytoplasm. Functionally, an essential GTPase which binds GTP, GDP and possibly (p)ppGpp with moderate affinity, with high nucleotide exchange rates and a fairly low GTP hydrolysis rate. Plays a role in control of the cell cycle, stress response, ribosome biogenesis and in those bacteria that undergo differentiation, in morphogenesis control. The polypeptide is GTPase Obg (Akkermansia muciniphila (strain ATCC BAA-835 / DSM 22959 / JCM 33894 / BCRC 81048 / CCUG 64013 / CIP 107961 / Muc)).